A 253-amino-acid chain; its full sequence is MLHKASPALSLLSSGYTGGGNLFPPSRNSSNLLFSPSGSRFSVQAAKGTNTKSLTGVVFEPFEEVKKEMELVPTTPFVSLARHKFSDDSESAINDQINVEYNVSYVYHALYAYFDRDNVGLKGFAKFFNDSSLEERGHAEMFMEYQNKRGGRVKLQSILMPVSEFDHEEKGDALHAMELALSLEKLTNEKLLKLQSVGVKNNDVQLVDFVESEFLGEQVEAIKKISEYVAQLRRIGKGHGVWHFDQMLLNDEV.

The transit peptide at 1–45 directs the protein to the chloroplast; sequence MLHKASPALSLLSSGYTGGGNLFPPSRNSSNLLFSPSGSRFSVQA. The interval 46–82 is extension peptide (EP); the sequence is AKGTNTKSLTGVVFEPFEEVKKEMELVPTTPFVSLAR. Positions 83 to 236 constitute a Ferritin-like diiron domain; the sequence is HKFSDDSESA…EYVAQLRRIG (154 aa). E100, E135, H138, E184, and Q218 together coordinate Fe cation.

Belongs to the ferritin family. In terms of assembly, oligomer of 24 subunits. There are two types of subunits: L (light) chain and H (heavy) chain. The major chain can be light or heavy, depending on the species and tissue type. The functional molecule forms a roughly spherical shell with a diameter of 12 nm and contains a central cavity into which the insoluble mineral iron core is deposited.

The protein resides in the plastid. It is found in the chloroplast. The enzyme catalyses 4 Fe(2+) + O2 + 4 H(+) = 4 Fe(3+) + 2 H2O. Stores iron in a soluble, non-toxic, readily available form. Important for iron homeostasis. Has ferroxidase activity. Iron is taken up in the ferrous form and deposited as ferric hydroxides after oxidation. This is Ferritin-2, chloroplastic (FER2) from Arabidopsis thaliana (Mouse-ear cress).